The chain runs to 354 residues: Peptide chain release factor 1 (354 aa).

At Q230 the chain carries N5-methylglutamine.

This sequence belongs to the prokaryotic/mitochondrial release factor family. In terms of processing, methylated by PrmC. Methylation increases the termination efficiency of RF1.

It is found in the cytoplasm. Functionally, peptide chain release factor 1 directs the termination of translation in response to the peptide chain termination codons UAG and UAA. This is Peptide chain release factor 1 from Pelobacter propionicus (strain DSM 2379 / NBRC 103807 / OttBd1).